We begin with the raw amino-acid sequence, 311 residues long: MNRLIRSLCLACAGLFAAGLAQAETLRIGGKTFTEQRILTAITAQFLQKRGYDVTVTTGLGSTLARAAQESGQLDIVWEYTGSSLIVYNHIDEKLDAAASYRRVKQLDEAQGLVWLKPTRFNNTYALAMPEEQAEHLGIQSVSDLARVLAEQQEAEPGSTHLFAMDPEFAGRPDGLGPMSELYGLHFTRNDIRQMDAGLVYTALKNRQVFLGLVYTTDGRLKDFKLRVLKDDKQYFPFYNAAPVVRKEVMQRHPEFATLFDPIIERLDDATMQALNARVDIEQQTPQKVAADFLREHHLLDDGQAGQGGSQ.

Positions 1-23 (MNRLIRSLCLACAGLFAAGLAQA) are cleaved as a signal peptide.

Belongs to the OsmX family.

The protein localises to the periplasm. Functionally, binds glycine-betaine. The polypeptide is Glycine-betaine-binding protein (Pseudomonas aeruginosa (strain ATCC 15692 / DSM 22644 / CIP 104116 / JCM 14847 / LMG 12228 / 1C / PRS 101 / PAO1)).